We begin with the raw amino-acid sequence, 349 residues long: Quinolinate synthase (349 aa).

The iminosuccinate site is built by His52 and Ser69. [4Fe-4S] cluster is bound at residue Cys114. Iminosuccinate-binding positions include 140 to 142 (YVN) and Ser157. Position 201 (Cys201) interacts with [4Fe-4S] cluster. Iminosuccinate-binding positions include 227-229 (HPE) and Thr255. A [4Fe-4S] cluster-binding site is contributed by Cys300.

This sequence belongs to the quinolinate synthase family. Type 2 subfamily. The cofactor is [4Fe-4S] cluster.

The protein resides in the cytoplasm. The catalysed reaction is iminosuccinate + dihydroxyacetone phosphate = quinolinate + phosphate + 2 H2O + H(+). It functions in the pathway cofactor biosynthesis; NAD(+) biosynthesis; quinolinate from iminoaspartate: step 1/1. Catalyzes the condensation of iminoaspartate with dihydroxyacetone phosphate to form quinolinate. This Mycobacterium bovis (strain BCG / Tokyo 172 / ATCC 35737 / TMC 1019) protein is Quinolinate synthase.